A 135-amino-acid polypeptide reads, in one-letter code: Ribosome-binding factor A (135 aa).

Belongs to the RbfA family. As to quaternary structure, monomer. Binds 30S ribosomal subunits, but not 50S ribosomal subunits or 70S ribosomes.

It localises to the cytoplasm. Its function is as follows. One of several proteins that assist in the late maturation steps of the functional core of the 30S ribosomal subunit. Associates with free 30S ribosomal subunits (but not with 30S subunits that are part of 70S ribosomes or polysomes). Required for efficient processing of 16S rRNA. May interact with the 5'-terminal helix region of 16S rRNA. This is Ribosome-binding factor A from Hyphomonas neptunium (strain ATCC 15444).